Reading from the N-terminus, the 3313-residue chain is MARRPLWWGLPGPSTPLLLLLLFSLFPSSREEMGGGGDQGWDPGVATATGPRAQIGSGAVALCPESPGVWEDGDPGLGVREPVFMKLRVGRQNARNGRGAPEQPNREPVVQALGSREQEAGQGSGYLLCWHPEISSCGRTGHLRRGSLPLDALSPGDSDLRNSSPHPSELLAQPDSPRPVAFQRNGRRSIRKRVETFRCCGKLWEPGHKGQGERSATSTVDRGPLRRDCLPGSLGSGLGEDSAPRAVRTAPAPGSAPHESRTAPERMRSRGLFRRGFLFERPGPRPPGFPTGAEAKRILSTNQARSRRAANRHPQFPQYNYQTLVPENEAAGTAVLRVVAQDPDPGEAGRLVYSLAALMNSRSLELFSIDPQSGLIRTAAALDRESMERHYLRVTAQDHGSPRLSATTMVAVTVADRNDHAPVFEQAQYRETLRENVEEGYPILQLRATDGDAPPNANLRYRFVGSPAARTAAAAAFEIDPRSGLISTSGRVDREHMESYELVVEASDQGQEPGPRSATVRVHITVLDENDNAPQFSEKRYVAQVREDVRPHTVVLRVTATDKDKDANGLVHYNIISGNSRGHFAIDSLTGEIQVMAPLDFEAEREYALRIRAQDAGRPPLSNNTGLASIQVVDINDHSPIFVSTPFQVSVLENAPLGHSVIHIQAVDADHGENSRLEYSLTGVASDTPFVINSATGWVSVSGPLDRESVEHYFFGVEARDHGSPPLSASASVTVTVLDVNDNRPEFTMKEYHLRLNEDAAVGTSVVSVTAVDRDANSAISYQITGGNTRNRFAISTQGGMGLVTLALPLDYKQERYFKLVLTASDRALHDHCYVHINITDANTHRPVFQSAHYSVSMNEDRPVGSTVVVISASDDDVGENARITYLLEDNLPQFRIDADSGAITLQAPLDYEDQVTYTLAITARDNGIPQKADTTYVEVMVNDVNDNAPQFVASHYTGLVSEDAPPFTSVLQISATDRDAHANGRVQYTFQNGEDGDGDFTIEPTSGIVRTVRRLDREAVPVYELTAYAVDRGVPPLRTPVSIQVTVQDVNDNAPVFPAEEFEVRVKENSIVGSVVAQITAVDPDDGPNAHIMYQIVEGNIPELFQMDIFSGELTALIDLDYEARQEYVIVVQATSAPLVSRATVHVRLVDQNDNSPVLNNFQILFNNYVSNRSDTFPSGIIGRIPAYDPDVSDHLFYSFERGNELQLLVVNQTSGELRLSRKLDNNRPLVASMLVTVTDGLHSVTAQCVLRVVIITEELLANSLTVRLENMWQERFLSPLLGHFLEGVAAVLATPTEDVFIFNIQNDTDVGGTVLNVSFSALAPRGAGAGAAGPWFSSEELQEQLYVRRAALAARSLLDVLPFDDNVCLREPCENYMKCVSVLRFDSSAPFLASASTLFRPIQPIAGLRCRCPPGFTGDFCETELDLCYSNPCRNGGACARREGGYTCVCRPRFTGEDCELDTEAGRCVPGVCRNGGTCTNAPNGGFRCQCPAGGAFEGPRCEVAARSFPPSSFVMFRGLRQRFHLTLSLSFATVQPSGLLFYNGRLNEKHDFLALELVAGQVRLTYSTGESSTVVSPTVPGGLSDGQWHTVHLRYYNKPRTDALGGAQGPSKDKVAVLSVDDCNVAVALRFGAEIGNYSCAAAGVQTSSKKSLDLTGPLLLGGVPNLPENFPVSRKDFIGCMRDLHIDGRRVDMAAFVANNGTTAGCQAKSHFCASGPCKNGGLCSERWGGFSCDCPVGFGGKDCRLTMAHPYHFQGNGTLSWDFGNDMPVSVPWYLGLSFRTRATKGVLMQVQLGPHSVLLCKLDQGLLSVTLSRASGHAVHLLLDQMTVSDGRWHDLRLELQEEPGGRRGHHIFMVSLDFTLFQDTMAMGSELEGLKVKHLHVGGPPPSSKEEGPQGLVGCIQGVWTGFTPFGSSALPPPSHRINVEPGCTVTNPCASGPCPPHANCKDLWQTFSCTCWPGYYGPGCVDACLLNPCQNQGSCRHLQGGPHGYTCDCASGYFGQHCEHRMDQQCPRGWWGSPTCGPCNCDVHKGFDPNCNKTSGQCHCKEFHYRPRGSDSCLPCDCYPVGSTSRSCAPHSGQCPCRPGALGRQCNSCDSPFAEVTASGCRVLYDACPKSLRSGVWWPQTKFGVLATVPCPRGALGLRGTGAAVRLCDEDHGWLEPDFFNCTSPAFRELSLLLDGLELNKTALDTVEAKKLAQRLREVTGQTDHYFSQDVRVTARLLAYLLAFESHQQGFGLTATQDAHFNENLLWAGSALLAPETGDLWAALGQRAPGGSPGSAGLVRHLEEYAATLARNMDLTYLNPVGLVTPNIMLSIDRMEQPSSSQGAHRYPRYHSNLFRGQDAWDPHTHVLLPSQSPQPSPSEVLPTSSNAENATASGVVSPPAPLEPESEPGISIVILLVYRALGGLLPAQFQAERRGARLPQNPVMNSPVVSVAVFRGRNFLRGALVSPINLEFRLLQTANRSKAICVQWDPPGPADQHGMWTARDCELVHRNGSHARCRCSRTGTFGVLMDASPRERLEGDLELLAVFTHVVVAASVTALVLTAAVLLSLRSLKSNVRGIHANVAAALGVAELLFLLGIHRTHNQLLCTVVAILLHYFFLSTFAWLLVQGLHLYRMQVEPRNVDRGAMRFYHALGWGVPAVLLGLAVGLDPEGYGNPDFCWISIHEPLIWSFAGPIVLVIVMNGIMFLLAARTSCSTGQREAKKTSVLRTLRSSFLLLLLVSASWLFGLLAVNHSVLAFHYLHAGLCGLQGLAVLLLFCVLNADARAAWTPACLGKKAAPEETRPAPGPGSGAYNNTALFEESGLIRITLGASTVSSVSSARSGRAQDQDSQRGRSYLRDNVLVRHGSTAEHAEHSLQAHAGPTDLDVAMFHRDAGADSDSDSDLSLEEERSLSIPSSESEDNGRTRGRFQRPLRRAAQSERLLAHPKDVDGNDLLSYWPALGECEAAPCALQAWGSERRLGLDSNKDAANNNQPELALTSGDETSLGRAQRQRKGILKNRLQYPLVPQTRGTPELSWCRAATLGHRAVPAASYGRIYAGGGTGSLSQPASRYSSREQLDLLLRRQLSRERLEEVPVPAPVLHPLSRPGSQERLDTAPARLEPRDRGSTLPRRQPPRDYPGTMAGRFGSRDALDLGAPREWLSTLPPPRRNRDLDPQHPPLPLSPQRPLSRDPLLPSRPLDSLSRISNSRERLDQVPSRHPSREALGPAPQLLRAREDPASGPSHGPSTEQLDILSSILASFNSSALSSVQSSSTPSGPHTTATPSATASALGPSTPRSATSHSISELSPDSEVPRSEGHS.

The first 31 residues, 1 to 31 (MARRPLWWGLPGPSTPLLLLLLFSLFPSSRE), serve as a signal peptide directing secretion. Topologically, residues 32 to 2538 (EMGGGGDQGW…RLEGDLELLA (2507 aa)) are extracellular. 2 disordered regions span residues 148 to 187 (LPLD…RNGR) and 205 to 269 (EPGH…RMRS). The span at 258-268 (HESRTAPERMR) shows a compositional bias: basic and acidic residues. 9 Cadherin domains span residues 317–424 (PQYN…APVF), 425–536 (EQAQ…APQF), 537–642 (SEKR…SPIF), 643–747 (VSTP…RPEF), 748–849 (TMKE…RPVF), 850–952 (QSAH…APQF), 953–1058 (VASH…APVF), 1059–1160 (PAEE…SPVL), and 1161–1257 (NNFQ…VVII). A glycan (N-linked (GlcNAc...) asparagine) is linked at Asn-623. A glycan (N-linked (GlcNAc...) asparagine) is linked at Asn-838. Asn-1173, Asn-1213, Asn-1308, and Asn-1318 each carry an N-linked (GlcNAc...) asparagine glycan. Residues 1366 to 1424 (DDNVCLREPCENYMKCVSVLRFDSSAPFLASASTLFRPIQPIAGLRCRCPPGFTGDFCE) enclose the EGF-like 1; calcium-binding domain. 9 disulfide bridges follow: Cys-1370/Cys-1381, Cys-1375/Cys-1412, Cys-1414/Cys-1423, Cys-1430/Cys-1441, Cys-1435/Cys-1450, Cys-1452/Cys-1461, Cys-1470/Cys-1481, Cys-1475/Cys-1491, and Cys-1493/Cys-1504. Positions 1426–1462 (ELDLCYSNPCRNGGACARREGGYTCVCRPRFTGEDCE) constitute an EGF-like 2; calcium-binding domain. Positions 1466-1505 (EAGRCVPGVCRNGGTCTNAPNGGFRCQCPAGGAFEGPRCE) constitute an EGF-like 3; calcium-binding domain. The region spanning 1506–1710 (VAARSFPPSS…VANNGTTAGC (205 aa)) is the Laminin G-like 1 domain. 2 N-linked (GlcNAc...) asparagine glycosylation sites follow: Asn-1640 and Asn-1704. 4 cysteine pairs are disulfide-bonded: Cys-1684–Cys-1710, Cys-1717–Cys-1728, Cys-1722–Cys-1737, and Cys-1739–Cys-1748. Positions 1713–1749 (KSHFCASGPCKNGGLCSERWGGFSCDCPVGFGGKDCR) constitute an EGF-like 4; calcium-binding domain. The Laminin G-like 2 domain maps to 1753-1935 (AHPYHFQGNG…SHRINVEPGC (183 aa)). N-linked (GlcNAc...) asparagine glycosylation occurs at Asn-1761. 9 disulfides stabilise this stretch: Cys-1906–Cys-1935, Cys-1941–Cys-1952, Cys-1946–Cys-1961, Cys-1963–Cys-1972, Cys-1976–Cys-1987, Cys-1981–Cys-1999, Cys-2001–Cys-2010, Cys-2018–Cys-2031, and Cys-2033–Cys-2043. An EGF-like 5; calcium-binding domain is found at 1937–1972 (VTNPCASGPCPPHANCKDLWQTFSCTCWPGYYGPGC). (3R)-3-hydroxyaspartate is present on Asp-1954. The EGF-like 6; calcium-binding domain occupies 1973-2011 (VDACLLNPCQNQGSCRHLQGGPHGYTCDCASGYFGQHCE). Residues 2012–2044 (HRMDQQCPRGWWGSPTCGPCNCDVHKGFDPNCN) enclose the EGF-like 7; calcium-binding domain. N-linked (GlcNAc...) asparagine glycosylation occurs at Asn-2044. The region spanning 2046 to 2081 (TSGQCHCKEFHYRPRGSDSCLPCDCYPVGSTSRSCA) is the EGF-like 8; calcium-binding domain. 5 disulfide bridges follow: Cys-2050/Cys-2065, Cys-2052/Cys-2068, Cys-2070/Cys-2080, Cys-2089/Cys-2098, and Cys-2101/Cys-2113. The region spanning 2068 to 2115 (CDCYPVGSTSRSCAPHSGQCPCRPGALGRQCNSCDSPFAEVTASGCRV) is the Laminin EGF-like domain. Tyr-2117 is subject to Phosphotyrosine. Residues Asn-2173, Asn-2192, Asn-2382, Asn-2472, and Asn-2504 are each glycosylated (N-linked (GlcNAc...) asparagine). Residues 2356 to 2395 (HTHVLLPSQSPQPSPSEVLPTSSNAENATASGVVSPPAPL) are disordered. One can recognise a GAIN-B domain in the interval 2364–2528 (QSPQPSPSEV…GVLMDASPRE (165 aa)). Over residues 2374-2387 (LPTSSNAENATASG) the composition is skewed to polar residues. 2 cysteine pairs are disulfide-bonded: Cys-2478–Cys-2510 and Cys-2498–Cys-2512. The interval 2478–2528 (CVQWDPPGPADQHGMWTARDCELVHRNGSHARCRCSRTGTFGVLMDASPRE) is GPS. Residues 2539–2559 (VFTHVVVAASVTALVLTAAVL) traverse the membrane as a helical segment. Topologically, residues 2560–2570 (LSLRSLKSNVR) are cytoplasmic. The helical transmembrane segment at 2571 to 2591 (GIHANVAAALGVAELLFLLGI) threads the bilayer. At 2592–2599 (HRTHNQLL) the chain is on the extracellular side. A helical transmembrane segment spans residues 2600–2620 (CTVVAILLHYFFLSTFAWLLV). The Cytoplasmic portion of the chain corresponds to 2621-2641 (QGLHLYRMQVEPRNVDRGAMR). Residues 2642–2662 (FYHALGWGVPAVLLGLAVGLD) traverse the membrane as a helical segment. Residues 2663 to 2679 (PEGYGNPDFCWISIHEP) lie on the Extracellular side of the membrane. A helical membrane pass occupies residues 2680 to 2700 (LIWSFAGPIVLVIVMNGIMFL). Residues 2701-2724 (LAARTSCSTGQREAKKTSVLRTLR) lie on the Cytoplasmic side of the membrane. Residues 2725–2745 (SSFLLLLLVSASWLFGLLAVN) traverse the membrane as a helical segment. At 2746 to 2752 (HSVLAFH) the chain is on the extracellular side. The chain crosses the membrane as a helical span at residues 2753–2773 (YLHAGLCGLQGLAVLLLFCVL). Residues 2774–3313 (NADARAAWTP…SEVPRSEGHS (540 aa)) lie on the Cytoplasmic side of the membrane. 2 disordered regions span residues 2887 to 2927 (AGAD…RPLR) and 2977 to 3004 (SNKD…RAQR). The span at 2889–2899 (ADSDSDSDLSL) shows a compositional bias: acidic residues. Basic residues predominate over residues 2918 to 2927 (TRGRFQRPLR). Tyr-3050 is subject to Phosphotyrosine. Disordered stretches follow at residues 3091 to 3242 (APVL…PSTE) and 3255 to 3313 (NSSA…EGHS). Ser-3098 is modified (phosphoserine). Residues 3102–3119 (SQERLDTAPARLEPRDRG) show a composition bias toward basic and acidic residues. Low complexity-rich tracts occupy residues 3178-3197 (QRPL…SLSR) and 3255-3289 (NSSA…PSTP). Residues 3290–3301 (RSATSHSISELS) are compositionally biased toward polar residues.

It belongs to the G-protein coupled receptor 2 family. LN-TM7 subfamily. Post-translationally, the iron and 2-oxoglutarate dependent 3-hydroxylation of aspartate and asparagine is (R) stereospecific within EGF domains. In terms of tissue distribution, expressed in the brain. Expressed in cerebellum, olfactory bulb, cerebral cortex, hippocampus and brain stem.

The protein localises to the cell membrane. Its function is as follows. Receptor that may have an important role in cell/cell signaling during nervous system formation. The polypeptide is Cadherin EGF LAG seven-pass G-type receptor 3 (Celsr3) (Rattus norvegicus (Rat)).